Here is a 325-residue protein sequence, read N- to C-terminus: 5-dehydro-2-deoxygluconokinase (325 aa).

The protein belongs to the carbohydrate kinase PfkB family.

It carries out the reaction 5-dehydro-2-deoxy-D-gluconate + ATP = 6-phospho-5-dehydro-2-deoxy-D-gluconate + ADP + H(+). It participates in polyol metabolism; myo-inositol degradation into acetyl-CoA; acetyl-CoA from myo-inositol: step 5/7. Its function is as follows. Catalyzes the phosphorylation of 5-dehydro-2-deoxy-D-gluconate (2-deoxy-5-keto-D-gluconate or DKG) to 6-phospho-5-dehydro-2-deoxy-D-gluconate (DKGP). The polypeptide is 5-dehydro-2-deoxygluconokinase (Listeria monocytogenes serovar 1/2a (strain ATCC BAA-679 / EGD-e)).